We begin with the raw amino-acid sequence, 600 residues long: DNA ligase (600 aa).

Residue Asp259 participates in ATP binding. Lys261 functions as the N6-AMP-lysine intermediate in the catalytic mechanism. ATP contacts are provided by Arg266, Arg281, Glu311, Phe351, Arg428, and Lys434.

Belongs to the ATP-dependent DNA ligase family. Mg(2+) serves as cofactor.

It carries out the reaction ATP + (deoxyribonucleotide)n-3'-hydroxyl + 5'-phospho-(deoxyribonucleotide)m = (deoxyribonucleotide)n+m + AMP + diphosphate.. Its function is as follows. DNA ligase that seals nicks in double-stranded DNA during DNA replication, DNA recombination and DNA repair. The protein is DNA ligase of Acidianus ambivalens (Desulfurolobus ambivalens).